Here is a 471-residue protein sequence, read N- to C-terminus: Extracellular endo-alpha-(1-&gt;5)-L-arabinanase (471 aa).

The N-terminal stretch at 1-19 is a signal peptide; the sequence is MRFLFLMITLTALTGYILA. Asp32 acts as the Proton acceptor in catalysis. Substrate is bound by residues Asp32, Gly117, 167–170, 187–189, and 219–223; these read NALD, SWF, and HSSME. Glu223 acts as the Proton donor in catalysis. His314 lines the Ca(2+) pocket.

The protein belongs to the glycosyl hydrolase 43 family. As to quaternary structure, monomer. Ca(2+) is required as a cofactor.

Its subcellular location is the secreted. The catalysed reaction is Endohydrolysis of (1-&gt;5)-alpha-arabinofuranosidic linkages in (1-&gt;5)-arabinans.. It participates in glycan metabolism; L-arabinan degradation. Its function is as follows. Involved in the degradation of arabinan and is a key enzyme in the complete degradation of the plant cell wall. Catalyzes the internal cleavage of alpha-(1-&gt;5)-L-arabinofuranosyl residues in different arabinan-containing polysaccharides, and releases arabinotriose and arabinobiose as end products. It acts on branched arabinan (from sugar beet), but more slowly when compared to linear or debranched arabinan. This is Extracellular endo-alpha-(1-&gt;5)-L-arabinanase from Thermotoga petrophila (strain ATCC BAA-488 / DSM 13995 / JCM 10881 / RKU-1).